We begin with the raw amino-acid sequence, 320 residues long: Methionyl-tRNA formyltransferase (320 aa).

112-115 (SILP) lines the (6S)-5,6,7,8-tetrahydrofolate pocket.

It belongs to the Fmt family.

It catalyses the reaction L-methionyl-tRNA(fMet) + (6R)-10-formyltetrahydrofolate = N-formyl-L-methionyl-tRNA(fMet) + (6S)-5,6,7,8-tetrahydrofolate + H(+). Functionally, attaches a formyl group to the free amino group of methionyl-tRNA(fMet). The formyl group appears to play a dual role in the initiator identity of N-formylmethionyl-tRNA by promoting its recognition by IF2 and preventing the misappropriation of this tRNA by the elongation apparatus. In Shewanella woodyi (strain ATCC 51908 / MS32), this protein is Methionyl-tRNA formyltransferase.